A 463-amino-acid polypeptide reads, in one-letter code: Elongation factor 1-alpha (463 aa).

The region spanning Lys5–Thr242 is the tr-type G domain. A G1 region spans residues Gly14–Ser21. GTP is bound at residue Gly14 to Ser21. The segment at Gly70–Asp74 is G2. The tract at residues Asp91–Gly94 is G3. GTP is bound by residues Asp91–His95 and Asn153–Asp156. A G4 region spans residues Asn153 to Asp156. The interval Ser194–Trp196 is G5. 5-glutamyl glycerylphosphorylethanolamine occurs at positions 301 and 374.

Belongs to the TRAFAC class translation factor GTPase superfamily. Classic translation factor GTPase family. EF-Tu/EF-1A subfamily.

The protein resides in the cytoplasm. In terms of biological role, this protein promotes the GTP-dependent binding of aminoacyl-tRNA to the A-site of ribosomes during protein biosynthesis. The polypeptide is Elongation factor 1-alpha (Bombyx mori (Silk moth)).